The primary structure comprises 869 residues: Probable beta-glucosidase F (869 aa).

The first 19 residues, 1–19, serve as a signal peptide directing secretion; sequence MRVLSAIALVASLASSALS. Asn-77 and Asn-261 each carry an N-linked (GlcNAc...) asparagine glycan. The active site involves Asp-289. N-linked (GlcNAc...) asparagine glycans are attached at residues Asn-332, Asn-364, Asn-399, and Asn-478. A disordered region spans residues 677 to 697; the sequence is STYPPTRPPKGPTPTYPTAIP. Pro residues predominate over residues 681–691; the sequence is PTRPPKGPTPT. Asn-728 is a glycosylation site (N-linked (GlcNAc...) asparagine).

This sequence belongs to the glycosyl hydrolase 3 family.

It is found in the secreted. It carries out the reaction Hydrolysis of terminal, non-reducing beta-D-glucosyl residues with release of beta-D-glucose.. The protein operates within glycan metabolism; cellulose degradation. In terms of biological role, beta-glucosidases are one of a number of cellulolytic enzymes involved in the degradation of cellulosic biomass. Catalyzes the last step releasing glucose from the inhibitory cellobiose. This chain is Probable beta-glucosidase F (bglF), found in Aspergillus fumigatus (strain ATCC MYA-4609 / CBS 101355 / FGSC A1100 / Af293) (Neosartorya fumigata).